The chain runs to 368 residues: MNKKTIVVKFGTSTLTQGSPKLNSPHMMEIVRQIAQLHNDGFRIVIVTSGAIAAGRHYLNHPQLPPTIASKQLLAAVGQSQLIQAWEKLFAIYDIHIGQLLLTRADIEDRERFLNARDTLHALLDNHIIPVINENDAVATAEIKVGDNDNLSALVAILVQAEQLYLLTDQQGLFDSDPRKNSEAKLIPVVEQITDHIRSIAGGSGTNLGTGGMMTKIIAADVATRSGIETIIAPGNRPNVIADLAYEQNIGTKFIAHQSDRLESRKQWLFAAPSAGIITIDNGAQNAILEQNKSLLPAGIINVEGRFSRGEVVKIRTQSGKDIALGMPRYNSDSLQLIKGRKSADIENVLGYEYGAVAMHRDDMIILS.

Residue Lys-9 coordinates ATP. Residues Ser-49, Asp-136, and Asn-148 each contribute to the substrate site. ATP is bound by residues Thr-168–Asp-169 and Thr-210–Lys-216. One can recognise a PUA domain in the interval Ala-275–Glu-353.

This sequence belongs to the glutamate 5-kinase family.

It is found in the cytoplasm. The catalysed reaction is L-glutamate + ATP = L-glutamyl 5-phosphate + ADP. It functions in the pathway amino-acid biosynthesis; L-proline biosynthesis; L-glutamate 5-semialdehyde from L-glutamate: step 1/2. Functionally, catalyzes the transfer of a phosphate group to glutamate to form L-glutamate 5-phosphate. The polypeptide is Glutamate 5-kinase (Haemophilus influenzae (strain PittGG)).